The primary structure comprises 396 residues: MSVRLVLAKGREKSLLRRHPWVFSGAVARMEGKASLGETIDIVDHQGKWLARGAYSPASQIRARVWTFDPSESIDIAFFTRRLQQAQKWRDWLAQKDGLDSYRLIAGESDGLPGITIDRFGNFLVLQLLSAGAEYQRAALISALQTLYPECAIYDRSDVAVRKKEGMELTQGPITGELPPALLPIEEHGMKLLVDIQHGHKTGYYLDQRDSRLATRRYVENKRVLNCFSYTGGFAVSALMGGCSQVVSVDTSHEALDIARQNVELNKLDLSKAEFVRDDVFKLLRTYRDRGEKFDVIVMDPPKFVENKSQLMGACRGYKDINMLAIQLLNEGGILLTFSCSGLMTSDLFQKIIADAAIDAGRDVQFIEQFRQAADHPVIATYPEGLYLKGFACRVM.

The region spanning 2 to 81 is the PUA domain; that stretch reads SVRLVLAKGR…ESIDIAFFTR (80 aa).

It belongs to the methyltransferase superfamily. RlmI family.

The protein localises to the cytoplasm. The catalysed reaction is cytidine(1962) in 23S rRNA + S-adenosyl-L-methionine = 5-methylcytidine(1962) in 23S rRNA + S-adenosyl-L-homocysteine + H(+). Specifically methylates the cytosine at position 1962 (m5C1962) of 23S rRNA. In Escherichia coli O1:K1 / APEC, this protein is Ribosomal RNA large subunit methyltransferase I.